Consider the following 1120-residue polypeptide: Transcription-repair-coupling factor (1120 aa).

The 166-residue stretch at 591–756 (DLSNGMLMDR…MTGLKELSII (166 aa)) folds into the Helicase ATP-binding domain. 604–611 (GDVGFGKT) provides a ligand contact to ATP. The short motif at 709–712 (DEEQ) is the DEEQ box element. Residues 777–931 (IIRDALLHEH…GFTIASHDMD (155 aa)) form the Helicase C-terminal domain.

This sequence in the N-terminal section; belongs to the UvrB family. It in the C-terminal section; belongs to the helicase family. RecG subfamily.

Its subcellular location is the cytoplasm. Functionally, couples transcription and DNA repair by recognizing RNA polymerase (RNAP) stalled at DNA lesions. Mediates ATP-dependent release of RNAP and its truncated transcript from the DNA, and recruitment of nucleotide excision repair machinery to the damaged site. This chain is Transcription-repair-coupling factor, found in Rickettsia bellii (strain RML369-C).